Reading from the N-terminus, the 760-residue chain is Xaa-Pro dipeptidyl-peptidase (760 aa).

Residues S349, D469, and H499 each act as charge relay system in the active site.

This sequence belongs to the peptidase S15 family. Homodimer.

The protein resides in the cytoplasm. It carries out the reaction Hydrolyzes Xaa-Pro-|- bonds to release unblocked, N-terminal dipeptides from substrates including Ala-Pro-|-p-nitroanilide and (sequentially) Tyr-Pro-|-Phe-Pro-|-Gly-Pro-|-Ile.. Functionally, removes N-terminal dipeptides sequentially from polypeptides having unsubstituted N-termini provided that the penultimate residue is proline. The sequence is that of Xaa-Pro dipeptidyl-peptidase from Streptococcus pyogenes serotype M2 (strain MGAS10270).